The sequence spans 197 residues: Small ribosomal subunit protein uS4y (197 aa).

The 75-residue stretch at 109–183 (RRLQTIVFKS…VKRRNERAGA (75 aa)) folds into the S4 RNA-binding domain. The interval 161 to 197 (SLTSPFGGGRPGRVKRRNERAGAKKASGGDGDEDDEE) is disordered.

This sequence belongs to the universal ribosomal protein uS4 family. As to quaternary structure, binds to the translation initiation factors TIF3E1.

This Arabidopsis thaliana (Mouse-ear cress) protein is Small ribosomal subunit protein uS4y (RPS9C).